A 262-amino-acid polypeptide reads, in one-letter code: Adenosylcobinamide-GDP ribazoletransferase (262 aa).

6 helical membrane passes run 43-63, 66-86, 120-140, 146-166, 191-211, and 242-262; these read YFGL…WLTQ, LPAG…TGGF, GALA…ELAL, AGSA…SIIF, LLIL…LAAL, and AAQQ…GNIL.

This sequence belongs to the CobS family. Mg(2+) serves as cofactor.

It is found in the cell inner membrane. It carries out the reaction alpha-ribazole + adenosylcob(III)inamide-GDP = adenosylcob(III)alamin + GMP + H(+). The catalysed reaction is alpha-ribazole 5'-phosphate + adenosylcob(III)inamide-GDP = adenosylcob(III)alamin 5'-phosphate + GMP + H(+). The protein operates within cofactor biosynthesis; adenosylcobalamin biosynthesis; adenosylcobalamin from cob(II)yrinate a,c-diamide: step 7/7. In terms of biological role, joins adenosylcobinamide-GDP and alpha-ribazole to generate adenosylcobalamin (Ado-cobalamin). Also synthesizes adenosylcobalamin 5'-phosphate from adenosylcobinamide-GDP and alpha-ribazole 5'-phosphate. This chain is Adenosylcobinamide-GDP ribazoletransferase, found in Shewanella baltica (strain OS155 / ATCC BAA-1091).